The chain runs to 143 residues: Small ribosomal subunit protein uS12 (143 aa).

Positions 1–20 are enriched in basic residues; it reads MGKCRGLRTARKLRSHRRDH. Residues 1–26 are disordered; it reads MGKCRGLRTARKLRSHRRDHKWHDKQ. Residue K37 forms a Glycyl lysine isopeptide (Lys-Gly) (interchain with G-Cter in SUMO2) linkage. N6-succinyllysine is present on K54. P62 bears the 3-hydroxyproline mark. At K135 the chain carries N6-acetyllysine.

This sequence belongs to the universal ribosomal protein uS12 family. Component of the 40S small ribosomal subunit. Part of the small subunit (SSU) processome, composed of more than 70 proteins and the RNA chaperone small nucleolar RNA (snoRNA) U3. As to quaternary structure, (Microbial infection) Interacts with the African swine fever virus (ASFV) ubiquitin-conjugating enzyme UBCv1; this interaction probably plays a role in the viral regulation of host protein synthesis. Hydroxylation at Pro-62 affects translation termination efficiency.

Its subcellular location is the cytoplasm. It is found in the cytosol. It localises to the rough endoplasmic reticulum. The protein resides in the nucleus. The protein localises to the nucleolus. In terms of biological role, component of the ribosome, a large ribonucleoprotein complex responsible for the synthesis of proteins in the cell. The small ribosomal subunit (SSU) binds messenger RNAs (mRNAs) and translates the encoded message by selecting cognate aminoacyl-transfer RNA (tRNA) molecules. The large subunit (LSU) contains the ribosomal catalytic site termed the peptidyl transferase center (PTC), which catalyzes the formation of peptide bonds, thereby polymerizing the amino acids delivered by tRNAs into a polypeptide chain. The nascent polypeptides leave the ribosome through a tunnel in the LSU and interact with protein factors that function in enzymatic processing, targeting, and the membrane insertion of nascent chains at the exit of the ribosomal tunnel. Plays an important role in translational accuracy. Part of the small subunit (SSU) processome, first precursor of the small eukaryotic ribosomal subunit. During the assembly of the SSU processome in the nucleolus, many ribosome biogenesis factors, an RNA chaperone and ribosomal proteins associate with the nascent pre-rRNA and work in concert to generate RNA folding, modifications, rearrangements and cleavage as well as targeted degradation of pre-ribosomal RNA by the RNA exosome. This is Small ribosomal subunit protein uS12 (RPS23) from Sus scrofa (Pig).